A 226-amino-acid chain; its full sequence is tRNA (guanine-N(1)-)-methyltransferase (226 aa).

S-adenosyl-L-methionine-binding positions include Gly-112 and 132–137; that span reads IGDYVL.

This sequence belongs to the RNA methyltransferase TrmD family. As to quaternary structure, homodimer.

Its subcellular location is the cytoplasm. The enzyme catalyses guanosine(37) in tRNA + S-adenosyl-L-methionine = N(1)-methylguanosine(37) in tRNA + S-adenosyl-L-homocysteine + H(+). Functionally, specifically methylates guanosine-37 in various tRNAs. The chain is tRNA (guanine-N(1)-)-methyltransferase from Christiangramia forsetii (strain DSM 17595 / CGMCC 1.15422 / KT0803) (Gramella forsetii).